Here is a 2297-residue protein sequence, read N- to C-terminus: Serine/threonine-protein kinase WNK2 (2297 aa).

Residues 1-10 (MDGDGGRRDV) show a composition bias toward basic and acidic residues. 2 disordered regions span residues 1–75 (MDGD…QRRV) and 89–183 (ARGR…EDDL). Omega-N-methylarginine occurs at positions 19 and 30. Ser-45 carries the phosphoserine modification. A compositionally biased stretch (low complexity) spans 92 to 120 (RPAAPAPAALVAQPGAPGAPADAGPEPVG). Residues 142 to 172 (GPREEAAATVRKEDEGAAEAKPEPGRTRRDE) show a composition bias toward basic and acidic residues. Over residues 173–182 (PEEEEDDEDD) the composition is skewed to acidic residues. A Protein kinase domain is found at 195 to 453 (LKFDIELGRG…IKDLLSHAFF (259 aa)). Residues Ser-205, 275-278 (TELM), and Lys-325 each bind ATP. Asp-342 functions as the Proton acceptor in the catalytic mechanism. Phosphoserine; by autocatalysis is present on residues Ser-352 and Ser-356. Position 560 is a phosphoserine (Ser-560). Disordered stretches follow at residues 579–630 (AQAG…DSQS), 699–751 (FPDP…PVVP), 917–1022 (PQMA…PGSQ), 1117–1185 (PVQE…ERAS), 1262–1297 (SEDT…SQAN), 1323–1345 (APEA…ASQG), 1374–1480 (SAQS…HEAP), and 1492–1586 (PCTP…DSTI). Residues 604-625 (PTSATSLASDSTFDSGQGSTVY) show a composition bias toward polar residues. Pro residues-rich tracts occupy residues 709–740 (VLPP…PTPL) and 939–1007 (PPQP…PLQP). A Phosphoserine modification is found at Ser-1150. Basic residues predominate over residues 1167–1178 (ARKHHRRSTRAR). Ser-1262 is modified (phosphoserine). A compositionally biased stretch (polar residues) spans 1392–1406 (SKEQPSFLASQQLLS). The segment covering 1411–1426 (SNPPGAPPAPLAPSSP) has biased composition (pro residues). Composition is skewed to polar residues over residues 1439 to 1453 (ATST…TASQ) and 1461 to 1473 (QGLT…SQPL). Residues 1510–1520 (EPLPPPAPEPS) show a composition bias toward pro residues. Residues 1526–1544 (PQPALGQPAPLLPAAVGAV) are compositionally biased toward low complexity. Over residues 1552 to 1565 (PSPPLGPTVPPQPP) the composition is skewed to pro residues. A Phosphoserine modification is found at Ser-1588. Over residues 1621–1631 (TLEPLRGDQPR) the composition is skewed to basic and acidic residues. A disordered region spans residues 1621 to 1865 (TLEPLRGDQP…PVQKQASLPV (245 aa)). Positions 1675–1688 (QGTSSSMTAESSPR) are enriched in polar residues. Ser-1685 bears the Phosphoserine mark. The segment covering 1721–1731 (ARVEPTDRDGG) has biased composition (basic and acidic residues). Phosphoserine is present on residues Ser-1736, Ser-1817, Ser-1818, Ser-1862, and Ser-1889. Disordered regions lie at residues 1970–1990 (NVGF…SKSK) and 2011–2031 (TGHL…QASV). Basic residues predominate over residues 1981 to 1990 (GRRRKTSKSK). The residue at position 2067 (Ser-2067) is a Phosphoserine. 2 disordered regions span residues 2123-2142 (SRSS…QPAL) and 2269-2297 (CCGH…PVRS). Residues 2272 to 2289 (HSTQPRGGQRVGSKTASF) are compositionally biased toward polar residues.

The protein belongs to the protein kinase superfamily. Ser/Thr protein kinase family. WNK subfamily. As to quaternary structure, forms a complex with the phosphorylated form of STK39. Mg(2+) is required as a cofactor. Autophosphorylated. Autophosphorylation at Ser-352 and Ser-356 promotes its activity. As to expression, expressed in various cancer cell lines (at protein level). Predominantly expressed in heart, brain, skeletal muscle and colon.

The protein resides in the cytoplasm. It localises to the cell membrane. It carries out the reaction L-seryl-[protein] + ATP = O-phospho-L-seryl-[protein] + ADP + H(+). It catalyses the reaction L-threonyl-[protein] + ATP = O-phospho-L-threonyl-[protein] + ADP + H(+). With respect to regulation, activation requires autophosphorylation of Ser-356 and, to a lower extent, Ser-352. Serine/threonine-protein kinase component of the WNK2-SPAK/OSR1 kinase cascade, which plays an important role in the regulation of electrolyte homeostasis, cell signaling, survival, and proliferation. The WNK2-SPAK/OSR1 kinase cascade is composed of WNK2, which mediates phosphorylation and activation of downstream kinases OXSR1/OSR1 and STK39/SPAK. Following activation, OXSR1/OSR1 and STK39/SPAK catalyze phosphorylation of ion cotransporters, regulating their activity. Acts as an activator and inhibitor of sodium-coupled chloride cotransporters and potassium-coupled chloride cotransporters respectively. Activates SLC12A2, SCNN1A, SCNN1B, SCNN1D and SGK1 and inhibits SLC12A5. Negatively regulates the EGF-induced activation of the ERK/MAPK-pathway and the downstream cell cycle progression. Affects MAPK3/MAPK1 activity by modulating the activity of MAP2K1 and this modulation depends on phosphorylation of MAP2K1 by PAK1. WNK2 acts by interfering with the activity of PAK1 by controlling the balance of the activity of upstream regulators of PAK1 activity, RHOA and RAC1, which display reciprocal activity. The protein is Serine/threonine-protein kinase WNK2 of Homo sapiens (Human).